The following is a 177-amino-acid chain: Ribulose bisphosphate carboxylase small subunit, chloroplastic (177 aa).

The transit peptide at 1–55 (MASLMSNAAVVTASTAAQANMVAPFSGLKSTSAFPVSRKSNVDITSLATNGGRVN) directs the protein to the chloroplast.

Belongs to the RuBisCO small chain family. In terms of assembly, heterohexadecamer of 8 large and 8 small subunits.

It is found in the plastid. Its subcellular location is the chloroplast. Its function is as follows. RuBisCO catalyzes two reactions: the carboxylation of D-ribulose 1,5-bisphosphate, the primary event in carbon dioxide fixation, as well as the oxidative fragmentation of the pentose substrate. Both reactions occur simultaneously and in competition at the same active site. Although the small subunit is not catalytic it is essential for maximal activity. In Silene latifolia subsp. alba (White campion), this protein is Ribulose bisphosphate carboxylase small subunit, chloroplastic.